Consider the following 753-residue polypeptide: Striatin-4 (753 aa).

The segment at 10-65 (VAAAASSCRPLGSGAGPGPTGAAPVSAPAPGPGPAGKGGGGGGSPGPTAGPEPLSL) is disordered. Residues 43-54 (PAGKGGGGGGSP) show a composition bias toward gly residues. Serine 53 carries the phosphoserine modification. A coiled-coil region spans residues 69-136 (LHFIQHEWAR…QERAKYHKLK (68 aa)). The tract at residues 71–79 (FIQHEWARF) is caveolin-binding. Residues 165-182 (ENSPLVWKEGRQLLRQYL) form a calmodulin-binding region. Serine 206 bears the Phosphoserine mark. Disordered stretches follow at residues 213-232 (VEPSEGAPRAPPGPAGLSGG), 271-345 (CEDE…SPHE), and 363-382 (VDGLPPKVTGPPPGTPQPRP). 2 stretches are compositionally biased toward acidic residues: residues 271–283 (CEDEDSDEDDELD) and 302–317 (EMEDEDEEDDSEDAIN). Serine 276 is subject to Phosphoserine. The span at 332 to 345 (PDPRRCTVDGSPHE) shows a compositional bias: basic and acidic residues. The span at 370-380 (VTGPPPGTPQP) shows a compositional bias: pro residues. 7 WD repeats span residues 436–475 (SHYDGIRSLAFHHSQSALLTASEDGTLKLWNLQKAVTAKK), 489–528 (AHRGPVLAVAMGSNSEYCYSGGADACIHSWKIPDLSMDPY), 542–581 (GHGDAVWGLAFSPTSQRLASCSADGTVRIWDPSSSSPACL), 587–628 (ASEH…ALLT), 635–674 (SGPTQINQVVSHPNQPLTITAHDDRGIRFLDNRTGKPVHS), 677–716 (AHLDAVTCLAVDPNGAFLMSGSHDCSLRLWSLDNKTCVQE), and 723–753 (KHEEAIHAVACHPSKALIASAGADALAKVFV).

It belongs to the WD repeat striatin family. Part of the core of STRIPAK complexes composed of PP2A catalytic and scaffolding subunits, the striatins (PP2A regulatory subunits), the striatin-associated proteins MOB4, STRIP1 and STRIP2, PDCD10 and members of the STE20 kinases, such as STK24 and STK26. Interacts with CTTNBP2NL.

It is found in the cytoplasm. In terms of biological role, calmodulin-binding scaffolding protein which is the center of the striatin-interacting phosphatase and kinase (STRIPAK) complexes. STRIPAK complexes have critical roles in protein (de)phosphorylation and are regulators of multiple signaling pathways including Hippo, MAPK, nuclear receptor and cytoskeleton remodeling. Different types of STRIPAK complexes are involved in a variety of biological processes such as cell growth, differentiation, apoptosis, metabolism and immune regulation. Key regulator of the expanded Hippo signaling pathway by interacting and allowing the inhibition of MAP4K kinases by the STRIPAK complex. This Homo sapiens (Human) protein is Striatin-4.